An 87-amino-acid chain; its full sequence is uncharacterized protein (87 aa).

The region spanning 4-87 (SIIEITNIKK…KPKGNITIKI (84 aa)) is the 2Fe-2S ferredoxin-type domain. Cysteine 38, cysteine 43, cysteine 46, and cysteine 75 together coordinate [2Fe-2S] cluster.

Requires [2Fe-2S] cluster as cofactor.

This is an uncharacterized protein from Buchnera aphidicola subsp. Acyrthosiphon pisum (strain APS) (Acyrthosiphon pisum symbiotic bacterium).